A 537-amino-acid polypeptide reads, in one-letter code: Sodium/hydrogen exchanger 9B2 (537 aa).

The segment covering 1–10 has biased composition (basic and acidic residues); it reads MGDEDKRITY. Residues 1–28 form a disordered region; that stretch reads MGDEDKRITYEDSEPSTGMNYTPSMHQE. The Cytoplasmic portion of the chain corresponds to 1 to 86; sequence MGDEDKRITY…ACPPHGLLDR (86 aa). Over residues 15-27 the composition is skewed to polar residues; the sequence is PSTGMNYTPSMHQ. Ser-49 bears the Phosphoserine mark. Residues 87 to 104 form a helical membrane-spanning segment; that stretch reads VITNVTIIVLLWAVVWSI. The Extracellular segment spans residues 105–113; sequence TGSECLPGG. A helical transmembrane segment spans residues 114–133; that stretch reads NLFGIIILFYCAIIGGKLLG. The Cytoplasmic portion of the chain corresponds to 134-144; that stretch reads LIKLPTLPPLP. Residues 145 to 161 form a helical membrane-spanning segment; the sequence is SLLGMLLAGFLIRNIPV. Over 162-171 the chain is Extracellular; that stretch reads INDNVQIKHK. Residues 172–189 traverse the membrane as a helical segment; sequence WSSSLRSIALSIILVRAG. At 190–200 the chain is on the cytoplasmic side; sequence LGLDSKALKKL. A helical transmembrane segment spans residues 201-227; sequence KGVCVRLSMGPCIVEACTSALLAHYLL. Residues 228–233 lie on the Extracellular side of the membrane; sequence GLPWQW. Residues 234–242 form a helical membrane-spanning segment; that stretch reads GFILGFVLG. Residues 243–270 are Cytoplasmic-facing; that stretch reads AVSPAVVVPSMLLLQGGGYGVEKGVPTL. Residues Val-244, Gly-275, Asp-278, and Asp-279 each coordinate Na(+). The chain crosses the membrane as a helical span at residues 271 to 290; it reads LMAAGSFDDILAITGFNTCL. Over 291 to 300 the chain is Extracellular; sequence GIAFSTGSTV. The chain crosses the membrane as a helical span at residues 301–324; the sequence is FNVLRGVLEVVIGVATGSVLGFFI. Over 325-339 the chain is Cytoplasmic; the sequence is QYFPSRDQDKLVCKR. A helical membrane pass occupies residues 340 to 357; sequence TFLVLGLSVLAVFSSVHF. Topologically, residues 358–361 are extracellular; sequence GFPG. Residues 362 to 373 form a helical membrane-spanning segment; the sequence is SGGLCTLVMAFL. Over 374 to 390 the chain is Cytoplasmic; the sequence is AGMGWTSEKAEVEKIIA. A helical membrane pass occupies residues 391 to 411; it reads VAWDIFQPLLFGLIGAEVSIA. Over 412-417 the chain is Extracellular; sequence SLRPET. Residues 418 to 440 form a helical membrane-spanning segment; that stretch reads VGLCVATVGIAVLIRILTTFLMV. Over 441–461 the chain is Cytoplasmic; that stretch reads CFAGFNLKEKIFISFAWLPKA. Residues 462–473 form a helical membrane-spanning segment; the sequence is TVQAAIGSVALD. The Extracellular segment spans residues 474-486; sequence TARSHGEKQLEDY. The helical transmembrane segment at 487 to 509 threads the bilayer; the sequence is GMDVLTVAFLSILITAPIGSLLI. The Cytoplasmic segment spans residues 510 to 537; it reads GLLGPRLLQKVEHQNKDEEVQGETSVQV.

This sequence belongs to the monovalent cation:proton antiporter 1 (CPA1) transporter (TC 2.A.36) family. As to quaternary structure, homodimer. Dimerization is essential for SLC9B2 activity. Lipids seem to play a role in the stabilization of the dimerization subdomain. In terms of tissue distribution, widely expressed. High levels detected in the distal tubules of the kidney nephron. Detected in red blood cells (at protein level).

The protein resides in the cell membrane. Its subcellular location is the mitochondrion membrane. It is found in the endosome membrane. It localises to the recycling endosome membrane. The protein localises to the cytoplasmic vesicle. The protein resides in the secretory vesicle. Its subcellular location is the synaptic vesicle membrane. It is found in the cell projection. It localises to the cilium. The protein localises to the flagellum membrane. The protein resides in the basolateral cell membrane. Its subcellular location is the apical cell membrane. It catalyses the reaction Li(+)(out) + H(+)(in) = Li(+)(in) + H(+)(out). The enzyme catalyses Li(+)(in) + Na(+)(out) = Li(+)(out) + Na(+)(in). The catalysed reaction is Na(+)(in) + H(+)(out) = Na(+)(out) + H(+)(in). With respect to regulation, allosterically inhibited by the N-terminal domain. Inhibited by phloretin. In terms of biological role, electroneutral Na(+) Li(+)/H(+) antiporter that extrudes Na(+) or Li(+) in exchange for external protons across the membrane. Uses the proton gradient/membrane potential to extrude sodium. Contributes to the regulation of intracellular pH and sodium homeostasis. Also able to mediate Na(+)/Li(+) antiporter activity in kidney. May play a physiological role in renal tubular function and blood pressure homeostasis. Plays an important role for insulin secretion and clathrin-mediated endocytosis in beta-cells. Involved in sperm motility and fertility. It is controversial whether SLC9B2 plays a role in osteoclast differentiation or not. In Homo sapiens (Human), this protein is Sodium/hydrogen exchanger 9B2.